The chain runs to 208 residues: N-(5'-phosphoribosyl)anthranilate isomerase (208 aa).

Belongs to the TrpF family.

The catalysed reaction is N-(5-phospho-beta-D-ribosyl)anthranilate = 1-(2-carboxyphenylamino)-1-deoxy-D-ribulose 5-phosphate. Its pathway is amino-acid biosynthesis; L-tryptophan biosynthesis; L-tryptophan from chorismate: step 3/5. The protein is N-(5'-phosphoribosyl)anthranilate isomerase of Neisseria gonorrhoeae (strain NCCP11945).